The following is a 287-amino-acid chain: Inorganic pyrophosphatase (287 aa).

Thr65 bears the Phosphothreonine mark. Arg79 serves as a coordination point for diphosphate. Tyr90 (proton donor) is an active-site residue. Mg(2+) is bound by residues Asp116, Asp121, and Asp153. Lys239 is covalently cross-linked (Glycyl lysine isopeptide (Lys-Gly) (interchain with G-Cter in ubiquitin)). Thr251 carries the post-translational modification Phosphothreonine. Ser266 carries the post-translational modification Phosphoserine. Lys279 is covalently cross-linked (Glycyl lysine isopeptide (Lys-Gly) (interchain with G-Cter in ubiquitin)). Position 286 is a phosphoserine (Ser286).

It belongs to the PPase family. In terms of assembly, homodimer. It depends on Mg(2+) as a cofactor.

The protein resides in the cytoplasm. It catalyses the reaction diphosphate + H2O = 2 phosphate + H(+). The sequence is that of Inorganic pyrophosphatase (IPP1) from Saccharomyces cerevisiae (strain ATCC 204508 / S288c) (Baker's yeast).